Consider the following 61-residue polypeptide: Small ribosomal subunit protein uS14 (61 aa).

4 residues coordinate Zn(2+): C24, C27, C40, and C43.

It belongs to the universal ribosomal protein uS14 family. Zinc-binding uS14 subfamily. Part of the 30S ribosomal subunit. Contacts proteins S3 and S10. The cofactor is Zn(2+).

Functionally, binds 16S rRNA, required for the assembly of 30S particles and may also be responsible for determining the conformation of the 16S rRNA at the A site. In Geotalea uraniireducens (strain Rf4) (Geobacter uraniireducens), this protein is Small ribosomal subunit protein uS14.